We begin with the raw amino-acid sequence, 409 residues long: Na(+)-translocating NADH-quinone reductase subunit F (409 aa).

Residues 5–25 (FIFGIGAFTAIVLVLAVVILI) form a helical membrane-spanning segment. The 2Fe-2S ferredoxin-type domain occupies 34–128 (GDITISINND…SMDVELPEEV (95 aa)). The [2Fe-2S] cluster site is built by C71, C77, C80, and C112. The FAD-binding FR-type domain maps to 131–271 (VKKWECTVIS…SGPFGEFFAK (141 aa)).

Belongs to the NqrF family. In terms of assembly, composed of six subunits; NqrA, NqrB, NqrC, NqrD, NqrE and NqrF. [2Fe-2S] cluster is required as a cofactor. The cofactor is FAD.

It localises to the cell inner membrane. The enzyme catalyses a ubiquinone + n Na(+)(in) + NADH + H(+) = a ubiquinol + n Na(+)(out) + NAD(+). Its function is as follows. NQR complex catalyzes the reduction of ubiquinone-1 to ubiquinol by two successive reactions, coupled with the transport of Na(+) ions from the cytoplasm to the periplasm. The first step is catalyzed by NqrF, which accepts electrons from NADH and reduces ubiquinone-1 to ubisemiquinone by a one-electron transfer pathway. The sequence is that of Na(+)-translocating NADH-quinone reductase subunit F from Mannheimia succiniciproducens (strain KCTC 0769BP / MBEL55E).